Reading from the N-terminus, the 1286-residue chain is Galactose/N-acetyl-D-galactosamine lectin heavy subunit 2 (1286 aa).

An N-terminal signal peptide occupies residues 1–15 (MKLLLLNILLLCCLA). The Extracellular portion of the chain corresponds to 16 to 1227 (DKLNEFSADI…NNVGAIAAAT (1212 aa)). 8 N-linked (GlcNAc...) asparagine glycosylation sites follow: Asn200, Asn331, Asn384, Asn462, Asn652, Asn883, Asn1197, and Asn1207. Residues 1228–1248 (TVAVVVVAVVVALIVVSIGLF) traverse the membrane as a helical segment. Over 1249 to 1286 (KTYQLVSSAMKNAITTTNENAEYVGADNEATNAATYNG) the chain is Cytoplasmic.

As to quaternary structure, heterodimer composed of a 170 kDa heavy subunit (hgl) and a 31/35 kDa light subunit (lgl); disulfide-linked. N-glycosylated.

The protein localises to the cell membrane. Its function is as follows. Lectin which binds galactose and N-acetyl-D-galactosamine of host glycoproteins and thus mediates adhesion to host cells. Mediates adherence to host colonic mucins, an essential step for pathogenic tissue invasion. This chain is Galactose/N-acetyl-D-galactosamine lectin heavy subunit 2, found in Entamoeba histolytica (strain ATCC 30459 / HM-1:IMSS / ABRM).